We begin with the raw amino-acid sequence, 1274 residues long: Myosin-binding protein C, cardiac-type (1274 aa).

Residue M1 is modified to N-acetylmethionine. The residue at position 47 (S47) is a Phosphoserine. Low complexity predominate over residues 107-141 (APAPAEATGAPGEAPAPAAELGESAPSPKGSSSAA). The disordered stretch occupies residues 107–153 (APAPAEATGAPGEAPAPAAELGESAPSPKGSSSAALNGPTPGAPDDP). Residues 153–256 (PIGLFVMRPQ…FDCSNFNLTV (104 aa)) form the Ig-like C2-type 1 domain. Zn(2+)-binding residues include Q208, H210, E223, and H225. Residues S275, S284, and S304 each carry the phosphoserine; by PKA and PKC modification. S311 and S427 each carry phosphoserine. Ig-like C2-type domains are found at residues 362 to 452 (STAF…VKEP), 453 to 543 (PVLI…VQEK), 544 to 633 (KLEV…HFME), and 645 to 771 (PKIH…VIDV). Cysteines 436 and 443 form a disulfide. At S550 the chain carries Phosphoserine. At T607 the chain carries Phosphothreonine. Fibronectin type-III domains follow at residues 774 to 870 (APAA…IGPP) and 872 to 967 (EPTH…VQEI). Positions 971-1065 (PRLQLPRHLR…ATLVLQVVDK (95 aa)) constitute an Ig-like C2-type 6 domain. The Fibronectin type-III 3 domain occupies 1068-1163 (PPQDLRVTDA…TKEPVFIPRP (96 aa)). The Ig-like C2-type 7 domain maps to 1181–1274 (PSFTQPLVNR…ECRLEVRVPQ (94 aa)). R1241 is subject to Omega-N-methylarginine.

This sequence belongs to the immunoglobulin superfamily. MyBP family. Substrate for phosphorylation by PKA and PKC. Reversible phosphorylation appears to modulate contraction. In terms of processing, polyubiquitinated.

Functionally, thick filament-associated protein located in the crossbridge region of vertebrate striated muscle a bands. In vitro it binds MHC, F-actin and native thin filaments, and modifies the activity of actin-activated myosin ATPase. It may modulate muscle contraction or may play a more structural role. The chain is Myosin-binding protein C, cardiac-type (MYBPC3) from Homo sapiens (Human).